Here is a 557-residue protein sequence, read N- to C-terminus: Urocanate hydratase (557 aa).

The segment at 1–20 (MSNPRHNEREVRSPRGDELN) is disordered. NAD(+)-binding positions include 52–53 (GG), Gln130, 176–178 (GMG), Glu196, Arg201, 242–243 (NA), 263–267 (QTSAH), 273–274 (YL), and Tyr322. Cys410 is a catalytic residue. Gly492 serves as a coordination point for NAD(+).

Belongs to the urocanase family. NAD(+) is required as a cofactor.

Its subcellular location is the cytoplasm. The enzyme catalyses 4-imidazolone-5-propanoate = trans-urocanate + H2O. Its pathway is amino-acid degradation; L-histidine degradation into L-glutamate; N-formimidoyl-L-glutamate from L-histidine: step 2/3. Its function is as follows. Catalyzes the conversion of urocanate to 4-imidazolone-5-propionate. In Brucella abortus (strain S19), this protein is Urocanate hydratase.